Reading from the N-terminus, the 328-residue chain is tRNA uridine(34) hydroxylase (328 aa).

A Rhodanese domain is found at Leu130–Glu224. Cys184 acts as the Cysteine persulfide intermediate in catalysis.

Belongs to the TrhO family.

The enzyme catalyses uridine(34) in tRNA + AH2 + O2 = 5-hydroxyuridine(34) in tRNA + A + H2O. Its function is as follows. Catalyzes oxygen-dependent 5-hydroxyuridine (ho5U) modification at position 34 in tRNAs. In Streptococcus pneumoniae (strain Hungary19A-6), this protein is tRNA uridine(34) hydroxylase.